The following is a 399-amino-acid chain: Phosphoglycerate kinase (399 aa).

Residues 22–24, Arg-37, 60–63, Arg-119, and Arg-152 contribute to the substrate site; these read DLN and HFGR. ATP contacts are provided by residues Lys-202, Glu-324, and 354–357; that span reads GGDT.

The protein belongs to the phosphoglycerate kinase family. Monomer.

The protein resides in the cytoplasm. It carries out the reaction (2R)-3-phosphoglycerate + ATP = (2R)-3-phospho-glyceroyl phosphate + ADP. It functions in the pathway carbohydrate degradation; glycolysis; pyruvate from D-glyceraldehyde 3-phosphate: step 2/5. This chain is Phosphoglycerate kinase, found in Rhizobium meliloti (strain 1021) (Ensifer meliloti).